Consider the following 333-residue polypeptide: Nucleoid-associated protein VC0395_A1624/VC395_2154 (333 aa).

It belongs to the YejK family.

The protein localises to the cytoplasm. It is found in the nucleoid. This is Nucleoid-associated protein VC0395_A1624/VC395_2154 from Vibrio cholerae serotype O1 (strain ATCC 39541 / Classical Ogawa 395 / O395).